The primary structure comprises 1037 residues: Presequence protease, mitochondrial (1037 aa).

Residues 1-15 (MWRCGGRQGLGVLRR) constitute a mitochondrion transit peptide. His104 provides a ligand contact to Zn(2+). The active-site Proton acceptor is the Glu107. Residues His108 and Glu205 each coordinate Zn(2+). A disulfide bond links Cys119 and Cys556. Lys759 is modified (N6-acetyllysine). Lys770 is modified (N6-acetyllysine; alternate). Lys770 carries the N6-succinyllysine; alternate modification. Residues 803-834 (IGRSKKERRPVRPHTVEKPVPSSSGGDAHVPH) form a disordered region. Basic residues predominate over residues 804–814 (GRSKKERRPVR). Lys849 carries the N6-succinyllysine modification. Lys884 is subject to N6-acetyllysine. Lys946 bears the N6-succinyllysine mark.

It belongs to the peptidase M16 family. PreP subfamily. In terms of assembly, monomer and homodimer; homodimerization is induced by binding of the substrate. Zn(2+) serves as cofactor. Post-translationally, a disulfide bond locks the enzyme in the closed conformation preventing substrate entry into the catalytic chamber.

It localises to the mitochondrion matrix. With respect to regulation, mainly exists in a closed and catalytically competent conformation but a closed-to-open switch allows substrate entry into the catalytic chamber. Substrate binding induces closure and dimerization. A disulfide bond may lock the enzyme in a closed conformation preventing substrate entry into the catalytic chamber, participating in redox regulation of the enzyme. Inhibited by metal-chelating agents. Inhibited by nickel and zinc excess, and slightly activated by manganese. Functionally, metalloendopeptidase of the mitochondrial matrix that functions in peptide cleavage and degradation rather than in protein processing. Has an ATP-independent activity. Specifically cleaves peptides in the range of 5 to 65 residues. Shows a preference for cleavage after small polar residues and before basic residues, but without any positional preference. Degrades the transit peptides of mitochondrial proteins after their cleavage. Also degrades other unstructured peptides. It is also able to degrade amyloid-beta protein 40, one of the peptides produced by APP processing, when it accumulates in mitochondrion. It is a highly efficient protease, at least toward amyloid-beta protein 40. Cleaves that peptide at a specific position and is probably not processive, releasing digested peptides intermediates that can be further cleaved subsequently. It is also able to degrade amyloid-beta protein 42. The chain is Presequence protease, mitochondrial from Pongo abelii (Sumatran orangutan).